A 65-amino-acid chain; its full sequence is Large ribosomal subunit protein bL35 (65 aa).

Belongs to the bacterial ribosomal protein bL35 family.

The protein is Large ribosomal subunit protein bL35 of Thermoanaerobacter sp. (strain X514).